Reading from the N-terminus, the 330-residue chain is 7,8-didemethyl-8-hydroxy-5-deazariboflavin synthase (330 aa).

The Radical SAM core domain maps to 13 to 253 (VTFSKNAFIP…EDISIQVPPN (241 aa)). [4Fe-4S] cluster contacts are provided by cysteine 27, cysteine 31, and cysteine 34.

This sequence belongs to the radical SAM superfamily. CofG family. As to quaternary structure, consists of two subunits, CofG and CofH. Requires [4Fe-4S] cluster as cofactor.

The catalysed reaction is 5-amino-5-(4-hydroxybenzyl)-6-(D-ribitylimino)-5,6-dihydrouracil + S-adenosyl-L-methionine = 7,8-didemethyl-8-hydroxy-5-deazariboflavin + 5'-deoxyadenosine + L-methionine + NH4(+) + H(+). The protein operates within cofactor biosynthesis; coenzyme F0 biosynthesis. Functionally, catalyzes the radical-mediated synthesis of 7,8-didemethyl-8-hydroxy-5-deazariboflavin from 5-amino-5-(4-hydroxybenzyl)-6-(D-ribitylimino)-5,6-dihydrouracil. This is 7,8-didemethyl-8-hydroxy-5-deazariboflavin synthase from Methanococcus maripaludis (strain DSM 14266 / JCM 13030 / NBRC 101832 / S2 / LL).